We begin with the raw amino-acid sequence, 485 residues long: Aspartyl/glutamyl-tRNA(Asn/Gln) amidotransferase subunit B (485 aa).

It belongs to the GatB/GatE family. GatB subfamily. In terms of assembly, heterotrimer of A, B and C subunits.

It carries out the reaction L-glutamyl-tRNA(Gln) + L-glutamine + ATP + H2O = L-glutaminyl-tRNA(Gln) + L-glutamate + ADP + phosphate + H(+). It catalyses the reaction L-aspartyl-tRNA(Asn) + L-glutamine + ATP + H2O = L-asparaginyl-tRNA(Asn) + L-glutamate + ADP + phosphate + 2 H(+). In terms of biological role, allows the formation of correctly charged Asn-tRNA(Asn) or Gln-tRNA(Gln) through the transamidation of misacylated Asp-tRNA(Asn) or Glu-tRNA(Gln) in organisms which lack either or both of asparaginyl-tRNA or glutaminyl-tRNA synthetases. The reaction takes place in the presence of glutamine and ATP through an activated phospho-Asp-tRNA(Asn) or phospho-Glu-tRNA(Gln). This is Aspartyl/glutamyl-tRNA(Asn/Gln) amidotransferase subunit B from Bordetella petrii (strain ATCC BAA-461 / DSM 12804 / CCUG 43448).